Consider the following 727-residue polypeptide: Glycerol-3-phosphate dehydrogenase, mitochondrial (727 aa).

A mitochondrion-targeting transit peptide spans 1–42 (MAFQKAVKGTILVGGGALATVLGLSQFAHYRRKQMNLAYVKA). Residue 71-99 (DILVIGGGATGSGCALDAVTRGLKTALVE) coordinates FAD. Tyrosine 601 carries the phosphotyrosine modification. EF-hand domains are found at residues 623–658 (SDID…INVQ) and 659–694 (MDEN…IQKG). Ca(2+)-binding residues include aspartate 672, asparagine 674, asparagine 676, glutamine 678, and glutamate 683.

The protein belongs to the FAD-dependent glycerol-3-phosphate dehydrogenase family. Requires FAD as cofactor.

The protein localises to the mitochondrion. It carries out the reaction a quinone + sn-glycerol 3-phosphate = dihydroxyacetone phosphate + a quinol. It participates in polyol metabolism; glycerol degradation via glycerol kinase pathway; glycerone phosphate from sn-glycerol 3-phosphate (anaerobic route): step 1/1. With respect to regulation, calcium-binding enhance the activity of the enzyme. Calcium-responsive mitochondrial glycerol-3-phosphate dehydrogenase which seems to be a key component of the pancreatic beta-cell glucose-sensing device. The sequence is that of Glycerol-3-phosphate dehydrogenase, mitochondrial from Homo sapiens (Human).